The sequence spans 176 residues: Large ribosomal subunit protein uL22 (176 aa).

Residues valine 113–aspartate 176 form a disordered region. Over residues serine 136–alanine 152 the composition is skewed to low complexity. The segment covering threonine 159–aspartate 176 has biased composition (basic and acidic residues).

This sequence belongs to the universal ribosomal protein uL22 family. Part of the 50S ribosomal subunit.

Functionally, this protein binds specifically to 23S rRNA; its binding is stimulated by other ribosomal proteins, e.g. L4, L17, and L20. It is important during the early stages of 50S assembly. It makes multiple contacts with different domains of the 23S rRNA in the assembled 50S subunit and ribosome. Its function is as follows. The globular domain of the protein is located near the polypeptide exit tunnel on the outside of the subunit, while an extended beta-hairpin is found that lines the wall of the exit tunnel in the center of the 70S ribosome. This is Large ribosomal subunit protein uL22 from Mycobacterium marinum (strain ATCC BAA-535 / M).